The sequence spans 135 residues: DNA-directed RNA polymerase subunit omega (135 aa).

The protein belongs to the RNA polymerase subunit omega family. In terms of assembly, the RNAP catalytic core consists of 2 alpha, 1 beta, 1 beta' and 1 omega subunit. When a sigma factor is associated with the core the holoenzyme is formed, which can initiate transcription.

The enzyme catalyses RNA(n) + a ribonucleoside 5'-triphosphate = RNA(n+1) + diphosphate. Its function is as follows. Promotes RNA polymerase assembly. Latches the N- and C-terminal regions of the beta' subunit thereby facilitating its interaction with the beta and alpha subunits. This chain is DNA-directed RNA polymerase subunit omega, found in Sinorhizobium medicae (strain WSM419) (Ensifer medicae).